Here is a 155-residue protein sequence, read N- to C-terminus: MKAKLAEVVEIFTDGACKGNPGVGGWGALLQYNGHRRELFGGEKMTTNNRMELLAVIRALEALTKPCEVRLHTDSLYVQKGISEWIHAWKKRDWRTADKKPVKNDDLWRELDLLTQRHKIEWLWVRGHSGHDGNEYADMLANRGVQTALRGVSAN.

Residues 5 to 146 (LAEVVEIFTD…ADMLANRGVQ (142 aa)) enclose the RNase H type-1 domain. The Mg(2+) site is built by D14, E52, D74, and D138.

Belongs to the RNase H family. In terms of assembly, monomer. It depends on Mg(2+) as a cofactor.

Its subcellular location is the cytoplasm. The catalysed reaction is Endonucleolytic cleavage to 5'-phosphomonoester.. In terms of biological role, endonuclease that specifically degrades the RNA of RNA-DNA hybrids. In Nitrosospira multiformis (strain ATCC 25196 / NCIMB 11849 / C 71), this protein is Ribonuclease H.